Reading from the N-terminus, the 632-residue chain is tRNA uridine 5-carboxymethylaminomethyl modification enzyme MnmG (632 aa).

FAD is bound by residues 15–20 (GAGHAG), isoleucine 127, and serine 182. 276–290 (GPRYCPSIEDKIVRF) is a binding site for NAD(+). Glutamine 373 contacts FAD.

This sequence belongs to the MnmG family. Homodimer. Heterotetramer of two MnmE and two MnmG subunits. FAD serves as cofactor.

It localises to the cytoplasm. In terms of biological role, NAD-binding protein involved in the addition of a carboxymethylaminomethyl (cmnm) group at the wobble position (U34) of certain tRNAs, forming tRNA-cmnm(5)s(2)U34. This is tRNA uridine 5-carboxymethylaminomethyl modification enzyme MnmG from Streptococcus pyogenes serotype M28 (strain MGAS6180).